The sequence spans 179 residues: Interleukin-10 (179 aa).

The signal sequence occupies residues 1-19 (MPSPALLCCCLVLLAGVGA). 2 cysteine pairs are disulfide-bonded: Cys-31–Cys-127 and Cys-81–Cys-133. Asn-135 carries N-linked (GlcNAc...) asparagine glycosylation.

The protein belongs to the IL-10 family. Homodimer. Interacts with IL10RA and IL10RB.

Its subcellular location is the secreted. In terms of biological role, major immune regulatory cytokine that acts on many cells of the immune system where it has profound anti-inflammatory functions, limiting excessive tissue disruption caused by inflammation. Mechanistically, IL10 binds to its heterotetrameric receptor comprising IL10RA and IL10RB leading to JAK1 and STAT2-mediated phosphorylation of STAT3. In turn, STAT3 translocates to the nucleus where it drives expression of anti-inflammatory mediators. Targets antigen-presenting cells (APCs) such as macrophages and monocytes and inhibits their release of pro-inflammatory cytokines including granulocyte-macrophage colony-stimulating factor /GM-CSF, granulocyte colony-stimulating factor/G-CSF, IL-1 alpha, IL-1 beta, IL-6, IL-8 and TNF-alpha. Also interferes with antigen presentation by reducing the expression of MHC-class II and co-stimulatory molecules, thereby inhibiting their ability to induce T cell activation. In addition, controls the inflammatory response of macrophages by reprogramming essential metabolic pathways including mTOR signaling. In Vulpes vulpes (Red fox), this protein is Interleukin-10 (IL10).